Reading from the N-terminus, the 556-residue chain is Formate--tetrahydrofolate ligase (556 aa).

65–72 (TPAGEGKS) lines the ATP pocket.

The protein belongs to the formate--tetrahydrofolate ligase family.

The enzyme catalyses (6S)-5,6,7,8-tetrahydrofolate + formate + ATP = (6R)-10-formyltetrahydrofolate + ADP + phosphate. The protein operates within one-carbon metabolism; tetrahydrofolate interconversion. In Streptococcus uberis (strain ATCC BAA-854 / 0140J), this protein is Formate--tetrahydrofolate ligase.